A 204-amino-acid polypeptide reads, in one-letter code: Urease accessory protein UreG (204 aa).

11-18 (GPVGAGKT) contacts GTP.

Belongs to the SIMIBI class G3E GTPase family. UreG subfamily. In terms of assembly, homodimer. UreD, UreF and UreG form a complex that acts as a GTP-hydrolysis-dependent molecular chaperone, activating the urease apoprotein by helping to assemble the nickel containing metallocenter of UreC. The UreE protein probably delivers the nickel.

Its subcellular location is the cytoplasm. Functionally, facilitates the functional incorporation of the urease nickel metallocenter. This process requires GTP hydrolysis, probably effectuated by UreG. This chain is Urease accessory protein UreG, found in Staphylococcus epidermidis (strain ATCC 35984 / DSM 28319 / BCRC 17069 / CCUG 31568 / BM 3577 / RP62A).